A 366-amino-acid polypeptide reads, in one-letter code: Putative type II methyltransferase M.MjaORF1200P (366 aa).

The SAM-dependent MTase C5-type domain maps to 5–366 (LKFIDLFCGC…IARVIKENLK (362 aa)). The active site involves Cys-133.

This sequence belongs to the class I-like SAM-binding methyltransferase superfamily. C5-methyltransferase family.

The enzyme catalyses a 2'-deoxycytidine in DNA + S-adenosyl-L-methionine = a 5-methyl-2'-deoxycytidine in DNA + S-adenosyl-L-homocysteine + H(+). A putative methylase that probably protects DNA from cleavage by the MjaORF1200P endonuclease. The sequence is that of Putative type II methyltransferase M.MjaORF1200P from Methanocaldococcus jannaschii (strain ATCC 43067 / DSM 2661 / JAL-1 / JCM 10045 / NBRC 100440) (Methanococcus jannaschii).